Consider the following 428-residue polypeptide: GTPase Obg (428 aa).

In terms of domain architecture, Obg spans M1–L158. Residues K118–G143 are disordered. The 171-residue stretch at A159–E329 folds into the OBG-type G domain. GTP-binding positions include G165–S172, F190–N194, D212–G215, N282–D285, and S310–V312. Residues S172 and T192 each contribute to the Mg(2+) site. The OCT domain occupies K350–D428.

This sequence belongs to the TRAFAC class OBG-HflX-like GTPase superfamily. OBG GTPase family. Monomer. It depends on Mg(2+) as a cofactor.

It is found in the cytoplasm. Functionally, an essential GTPase which binds GTP, GDP and possibly (p)ppGpp with moderate affinity, with high nucleotide exchange rates and a fairly low GTP hydrolysis rate. Plays a role in control of the cell cycle, stress response, ribosome biogenesis and in those bacteria that undergo differentiation, in morphogenesis control. The polypeptide is GTPase Obg (Bacillus licheniformis (strain ATCC 14580 / DSM 13 / JCM 2505 / CCUG 7422 / NBRC 12200 / NCIMB 9375 / NCTC 10341 / NRRL NRS-1264 / Gibson 46)).